We begin with the raw amino-acid sequence, 112 residues long: UPF0122 protein CPR_1686 (112 aa).

Belongs to the UPF0122 family.

Might take part in the signal recognition particle (SRP) pathway. This is inferred from the conservation of its genetic proximity to ftsY/ffh. May be a regulatory protein. The sequence is that of UPF0122 protein CPR_1686 from Clostridium perfringens (strain SM101 / Type A).